A 220-amino-acid polypeptide reads, in one-letter code: GTP cyclohydrolase 1 (220 aa).

Zn(2+) contacts are provided by C109, H112, and C180.

It belongs to the GTP cyclohydrolase I family. In terms of assembly, homomer.

The enzyme catalyses GTP + H2O = 7,8-dihydroneopterin 3'-triphosphate + formate + H(+). It functions in the pathway cofactor biosynthesis; 7,8-dihydroneopterin triphosphate biosynthesis; 7,8-dihydroneopterin triphosphate from GTP: step 1/1. The protein is GTP cyclohydrolase 1 of Edwardsiella ictaluri (strain 93-146).